Here is a 298-residue protein sequence, read N- to C-terminus: O-glycoside alpha-1,2-mannosyltransferase homolog 6 (298 aa).

Glutamate 220 acts as the Nucleophile in catalysis.

It belongs to the glycosyltransferase 15 family.

The protein resides in the cytoplasm. The protein localises to the nucleus. In terms of biological role, probable mannosyltransferase involved in O-glycosylation of cell wall and secreted proteins. In Schizosaccharomyces pombe (strain 972 / ATCC 24843) (Fission yeast), this protein is O-glycoside alpha-1,2-mannosyltransferase homolog 6 (omh6).